Reading from the N-terminus, the 468-residue chain is IQ domain-containing protein C (468 aa).

An IQ domain is found at 6-35; sequence LVLKVTALQACIRGFLVRRQFQSLRGEYEA. Disordered stretches follow at residues 113 to 157, 202 to 245, and 329 to 468; these read NASS…GPGL, EVNQ…PGEP, and SHKE…GPAG. Positions 139–150 are enriched in basic and acidic residues; the sequence is QETRDVSRKNDP. Basic and acidic residues predominate over residues 415-426; that stretch reads SSIERSPSESSH.

This chain is IQ domain-containing protein C (IQCC), found in Bos taurus (Bovine).